A 102-amino-acid polypeptide reads, in one-letter code: Small ribosomal subunit protein uS10 (102 aa).

The protein belongs to the universal ribosomal protein uS10 family. In terms of assembly, part of the 30S ribosomal subunit.

Its function is as follows. Involved in the binding of tRNA to the ribosomes. In Rhodospirillum centenum (strain ATCC 51521 / SW), this protein is Small ribosomal subunit protein uS10.